The chain runs to 607 residues: Elongation factor 4 (607 aa).

The tr-type G domain occupies 11-193 (SRIRNFSIIA…QVVEKVPAPA (183 aa)). GTP-binding positions include 23-28 (DHGKST) and 140-143 (NKID).

The protein belongs to the TRAFAC class translation factor GTPase superfamily. Classic translation factor GTPase family. LepA subfamily.

The protein resides in the cell membrane. It carries out the reaction GTP + H2O = GDP + phosphate + H(+). Functionally, required for accurate and efficient protein synthesis under certain stress conditions. May act as a fidelity factor of the translation reaction, by catalyzing a one-codon backward translocation of tRNAs on improperly translocated ribosomes. Back-translocation proceeds from a post-translocation (POST) complex to a pre-translocation (PRE) complex, thus giving elongation factor G a second chance to translocate the tRNAs correctly. Binds to ribosomes in a GTP-dependent manner. This is Elongation factor 4 from Shouchella clausii (strain KSM-K16) (Alkalihalobacillus clausii).